The sequence spans 336 residues: D-alanine--D-alanine ligase (336 aa).

One can recognise an ATP-grasp domain in the interval 124-330 (KMWFSALGIP…FTEYLSLVIN (207 aa)). 154 to 209 (ALENWGSIFVKAASQGSSVGCYKVDDSSKVAGVLKDAFGYAPYVIVEKTIKARELE) contributes to the ATP binding site. 3 residues coordinate Mg(2+): Asp-284, Glu-297, and Asn-299.

Belongs to the D-alanine--D-alanine ligase family. Mg(2+) serves as cofactor. Mn(2+) is required as a cofactor.

It is found in the cytoplasm. It catalyses the reaction 2 D-alanine + ATP = D-alanyl-D-alanine + ADP + phosphate + H(+). Its pathway is cell wall biogenesis; peptidoglycan biosynthesis. Cell wall formation. The sequence is that of D-alanine--D-alanine ligase from Shewanella sp. (strain MR-4).